The primary structure comprises 103 residues: Small ribosomal subunit protein uS10 (103 aa).

The protein belongs to the universal ribosomal protein uS10 family. As to quaternary structure, part of the 30S ribosomal subunit.

Functionally, involved in the binding of tRNA to the ribosomes. The polypeptide is Small ribosomal subunit protein uS10 (Pseudomonas aeruginosa (strain LESB58)).